An 895-amino-acid polypeptide reads, in one-letter code: Procollagen lysyl hydroxylase and glycosyltransferase (895 aa).

Residues 1–194 (MISRTYVINL…PSDEFIPIMH (194 aa)) form a lysyl hydroxylase region region. Positions 537 to 895 (YYFYISGDCI…KRYILVSFVN (359 aa)) are glucosyl transferase region. The Fe2OG dioxygenase domain occupies 805–895 (DINLAFVVKY…KRYILVSFVN (91 aa)). Fe cation-binding residues include H825, D827, and H877. R887 is a catalytic residue.

Fe cation is required as a cofactor. L-ascorbate serves as cofactor.

The enzyme catalyses L-lysyl-[collagen] + 2-oxoglutarate + O2 = (5R)-5-hydroxy-L-lysyl-[collagen] + succinate + CO2. Functionally, displays two enzymatic activities involved in procollagen processing. Forms hydroxylysine residues in -Xaa-Lys-Gly- sequences in collagens. These hydroxylysines are subsequentially glucosylated by a glucosyltransferase activity. Collagen post-translationally modified is detected in mimivirus virion. This chain is Procollagen lysyl hydroxylase and glycosyltransferase, found in Acanthamoeba polyphaga (Amoeba).